Here is a 207-residue protein sequence, read N- to C-terminus: Superoxide dismutase [Mn] (207 aa).

Mn(2+)-binding residues include H28, H76, D160, and H164.

It belongs to the iron/manganese superoxide dismutase family. It depends on Mn(2+) as a cofactor.

The catalysed reaction is 2 superoxide + 2 H(+) = H2O2 + O2. In terms of biological role, destroys superoxide anion radicals which are normally produced within the cells and which are toxic to biological systems. The polypeptide is Superoxide dismutase [Mn] (sodA) (Mycolicibacterium fortuitum (Mycobacterium fortuitum)).